The primary structure comprises 78 residues: Large ribosomal subunit protein bL28 (78 aa).

The protein belongs to the bacterial ribosomal protein bL28 family.

This Treponema pallidum (strain Nichols) protein is Large ribosomal subunit protein bL28 (rpmB).